Reading from the N-terminus, the 346-residue chain is Fructose-1,6-bisphosphatase class 1 (346 aa).

Residues glutamate 96, aspartate 119, leucine 121, and aspartate 122 each contribute to the Mg(2+) site. Substrate is bound by residues 122–125, asparagine 214, tyrosine 247, and lysine 277; that span reads DGSS. Glutamate 283 contributes to the Mg(2+) binding site.

This sequence belongs to the FBPase class 1 family. In terms of assembly, homotetramer. Requires Mg(2+) as cofactor.

It is found in the cytoplasm. It catalyses the reaction beta-D-fructose 1,6-bisphosphate + H2O = beta-D-fructose 6-phosphate + phosphate. The protein operates within carbohydrate biosynthesis; gluconeogenesis. This is Fructose-1,6-bisphosphatase class 1 from Cytophaga hutchinsonii (strain ATCC 33406 / DSM 1761 / CIP 103989 / NBRC 15051 / NCIMB 9469 / D465).